The primary structure comprises 636 residues: MRGGRGAPFWLWPLPKLALLPLLWVLFQRTRPQGSAGPLQCYGVGPLGDLNCSWEPLGDLGAPSELHLQSQKYRSNKTQTVAVAAGRSWVAIPREQLTMSDKLLVWGTKAGQPLWPPVFVNLETQMKPNAPRLGPDVDFSEDDPLEATVHWAPPTWPSHKVLICQFHYRRCQEAAWTLLEPELKTIPLTPVEIQDLELATGYKVYGRCRMEKEEDLWGEWSPILSFQTPPSAPKDVWVSGNLCGTPGGEEPLLLWKAPGPCVQVSYKVWFWVGGRELSPEGITCCCSLIPSGAEWARVSAVNATSWEPLTNLSLVCLDSASAPRSVAVSSIAGSTELLVTWQPGPGEPLEHVVDWARDGDPLEKLNWVRLPPGNLSALLPGNFTVGVPYRITVTAVSASGLASASSVWGFREELAPLVGPTLWRLQDAPPGTPAIAWGEVPRHQLRGHLTHYTLCAQSGTSPSVCMNVSGNTQSVTLPDLPWGPCELWVTASTIAGQGPPGPILRLHLPDNTLRWKVLPGILFLWGLFLLGCGLSLATSGRCYHLRHKVLPRWVWEKVPDPANSSSGQPHMEQVPEAQPLGDLPILEVEEMEPPPVMESSQPAQATAPLDSGYEKHFLPTPEELGLLGPPRPQVLA.

An N-terminal signal peptide occupies residues 1 to 32 (MRGGRGAPFWLWPLPKLALLPLLWVLFQRTRP). Residues 33-516 (QGSAGPLQCY…HLPDNTLRWK (484 aa)) lie on the Extracellular side of the membrane. N51 and N76 each carry an N-linked (GlcNAc...) asparagine glycan. Residues 131 to 231 (PRLGPDVDFS…PILSFQTPPS (101 aa)) form the Fibronectin type-III 1 domain. A WSXWS motif motif is present at residues 217–221 (WGEWS). N302, N311, N374, N382, and N467 each carry an N-linked (GlcNAc...) asparagine glycan. Fibronectin type-III domains are found at residues 322 to 417 (APRS…LAPL) and 419 to 511 (GPTL…LPDN). Residues 517–537 (VLPGILFLWGLFLLGCGLSLA) form a helical membrane-spanning segment. Over 538 to 636 (TSGRCYHLRH…LGPPRPQVLA (99 aa)) the chain is Cytoplasmic. The Box 1 motif motif lies at 554 to 562 (VWEKVPDPA). A disordered region spans residues 587 to 636 (EVEEMEPPPVMESSQPAQATAPLDSGYEKHFLPTPEELGLLGPPRPQVLA). Positions 618 to 628 (LPTPEELGLLG) are enriched in low complexity.

This sequence belongs to the type I cytokine receptor family. Type 2 subfamily. In terms of assembly, component of a receptor complex composed of IL6ST/GP130, IL27RA/WSX1 and CNTFR which interacts with the neuroprotective peptide humanin. In terms of tissue distribution, highly expressed in lymphoid tissues such as spleen, lymph nodes and peripheral blood leukocytes. Weakly expressed in other tissues examined including heart, brain, fetal and adult lung, liver, skeletal muscle, kidney, pancreas, prostate, testis, ovary, small intestine, kidney and colon. In the lymphoid system, higher level expression in CD4+ T-cell subsets than in CD8+ T-cell subsets. Also weaker expression in CD19+ B-cells and monocytes.

The protein localises to the membrane. In terms of biological role, receptor for IL27. Requires IL6ST/GP130 to mediate signal transduction in response to IL27. This signaling system acts through STAT3 and STAT1. Acts as a receptor for the neuroprotective peptide humanin as part of a complex with IL6ST/GP130 and CNTFR. Involved in the regulation of Th1-type immune responses. Also appears to be involved in innate defense mechanisms. The polypeptide is Interleukin-27 receptor subunit alpha (IL27RA) (Homo sapiens (Human)).